The chain runs to 141 residues: Large ribosomal subunit protein uL11 (141 aa).

The protein belongs to the universal ribosomal protein uL11 family. Part of the ribosomal stalk of the 50S ribosomal subunit. Interacts with L10 and the large rRNA to form the base of the stalk. L10 forms an elongated spine to which L12 dimers bind in a sequential fashion forming a multimeric L10(L12)X complex. Post-translationally, one or more lysine residues are methylated.

In terms of biological role, forms part of the ribosomal stalk which helps the ribosome interact with GTP-bound translation factors. The chain is Large ribosomal subunit protein uL11 from Chlamydia felis (strain Fe/C-56) (Chlamydophila felis).